A 500-amino-acid polypeptide reads, in one-letter code: Protein nucleotidyltransferase YdiU (500 aa).

8 residues coordinate ATP: glycine 96, glycine 98, arginine 99, lysine 119, aspartate 131, glycine 132, arginine 182, and arginine 189. Aspartate 258 acts as the Proton acceptor in catalysis. Residues asparagine 259 and aspartate 268 each coordinate Mg(2+). Aspartate 268 contacts ATP.

The protein belongs to the SELO family. Mg(2+) is required as a cofactor. Requires Mn(2+) as cofactor.

The catalysed reaction is L-seryl-[protein] + ATP = 3-O-(5'-adenylyl)-L-seryl-[protein] + diphosphate. It carries out the reaction L-threonyl-[protein] + ATP = 3-O-(5'-adenylyl)-L-threonyl-[protein] + diphosphate. It catalyses the reaction L-tyrosyl-[protein] + ATP = O-(5'-adenylyl)-L-tyrosyl-[protein] + diphosphate. The enzyme catalyses L-histidyl-[protein] + UTP = N(tele)-(5'-uridylyl)-L-histidyl-[protein] + diphosphate. The catalysed reaction is L-seryl-[protein] + UTP = O-(5'-uridylyl)-L-seryl-[protein] + diphosphate. It carries out the reaction L-tyrosyl-[protein] + UTP = O-(5'-uridylyl)-L-tyrosyl-[protein] + diphosphate. Functionally, nucleotidyltransferase involved in the post-translational modification of proteins. It can catalyze the addition of adenosine monophosphate (AMP) or uridine monophosphate (UMP) to a protein, resulting in modifications known as AMPylation and UMPylation. This Rhizobium etli (strain ATCC 51251 / DSM 11541 / JCM 21823 / NBRC 15573 / CFN 42) protein is Protein nucleotidyltransferase YdiU.